Here is a 473-residue protein sequence, read N- to C-terminus: Ribulose bisphosphate carboxylase large chain (473 aa).

A propeptide spanning residues 1–2 (MS) is cleaved from the precursor. Pro-3 is subject to N-acetylproline. Lys-14 is subject to N6,N6,N6-trimethyllysine. 2 residues coordinate substrate: Asn-123 and Thr-173. Lys-175 functions as the Proton acceptor in the catalytic mechanism. Position 177 (Lys-177) interacts with substrate. Positions 201, 203, and 204 each coordinate Mg(2+). N6-carboxylysine is present on Lys-201. Residue His-294 is the Proton acceptor of the active site. Positions 295, 327, and 379 each coordinate substrate.

The protein belongs to the RuBisCO large chain family. Type I subfamily. In terms of assembly, heterohexadecamer of 8 large chains and 8 small chains; disulfide-linked. The disulfide link is formed within the large subunit homodimers. Mg(2+) is required as a cofactor. Post-translationally, the disulfide bond which can form in the large chain dimeric partners within the hexadecamer appears to be associated with oxidative stress and protein turnover.

The protein resides in the plastid. It is found in the chloroplast. It catalyses the reaction 2 (2R)-3-phosphoglycerate + 2 H(+) = D-ribulose 1,5-bisphosphate + CO2 + H2O. The catalysed reaction is D-ribulose 1,5-bisphosphate + O2 = 2-phosphoglycolate + (2R)-3-phosphoglycerate + 2 H(+). In terms of biological role, ruBisCO catalyzes two reactions: the carboxylation of D-ribulose 1,5-bisphosphate, the primary event in carbon dioxide fixation, as well as the oxidative fragmentation of the pentose substrate in the photorespiration process. Both reactions occur simultaneously and in competition at the same active site. In Vigna unguiculata (Cowpea), this protein is Ribulose bisphosphate carboxylase large chain.